Reading from the N-terminus, the 122-residue chain is MKTQKQYLGAFGEDVALQQYLDDQATLLDRNVRYSCGELDLIVRLASGVVVFVEVKTRRGSAFDSAAAVNNQKMLRMRRAAALWLEGKPYTPIRFDVVAIVLDPHTGRPGITVYEDVEHGAR.

This sequence belongs to the UPF0102 family.

The protein is UPF0102 protein cgR_1859 of Corynebacterium glutamicum (strain R).